The primary structure comprises 237 residues: D-aminoacyl-tRNA deacylase (237 aa).

It belongs to the DtdA deacylase family. In terms of assembly, monomer. Zn(2+) is required as a cofactor.

The catalysed reaction is a D-aminoacyl-tRNA + H2O = a tRNA + a D-alpha-amino acid + H(+). It catalyses the reaction glycyl-tRNA(Ala) + H2O = tRNA(Ala) + glycine + H(+). Functionally, D-aminoacyl-tRNA deacylase with broad substrate specificity. By recycling D-aminoacyl-tRNA to D-amino acids and free tRNA molecules, this enzyme counteracts the toxicity associated with the formation of D-aminoacyl-tRNA entities in vivo. The chain is D-aminoacyl-tRNA deacylase from Metallosphaera sedula (strain ATCC 51363 / DSM 5348 / JCM 9185 / NBRC 15509 / TH2).